Here is a 102-residue protein sequence, read N- to C-terminus: Large ribosomal subunit protein bL21 (102 aa).

Belongs to the bacterial ribosomal protein bL21 family. Part of the 50S ribosomal subunit. Contacts protein L20.

Its function is as follows. This protein binds to 23S rRNA in the presence of protein L20. This Bacillus licheniformis (strain ATCC 14580 / DSM 13 / JCM 2505 / CCUG 7422 / NBRC 12200 / NCIMB 9375 / NCTC 10341 / NRRL NRS-1264 / Gibson 46) protein is Large ribosomal subunit protein bL21.